Reading from the N-terminus, the 510-residue chain is NADH-quinone oxidoreductase subunit N (510 aa).

A run of 14 helical transmembrane segments spans residues leucine 14–alanine 34, valine 42–methionine 62, alanine 84–leucine 104, glycine 113–alanine 133, leucine 135–leucine 155, valine 170–leucine 190, methionine 208–phenylalanine 228, proline 247–phenylalanine 267, phenylalanine 286–glycine 306, serine 323–phenylalanine 343, valine 346–valine 366, alanine 390–phenylalanine 410, tryptophan 426–isoleucine 446, and isoleucine 466–leucine 486.

Belongs to the complex I subunit 2 family. In terms of assembly, NDH-1 is composed of 14 different subunits. Subunits NuoA, H, J, K, L, M, N constitute the membrane sector of the complex.

Its subcellular location is the cell membrane. The enzyme catalyses a quinone + NADH + 5 H(+)(in) = a quinol + NAD(+) + 4 H(+)(out). Functionally, NDH-1 shuttles electrons from NADH, via FMN and iron-sulfur (Fe-S) centers, to quinones in the respiratory chain. The immediate electron acceptor for the enzyme in this species is believed to be a menaquinone. Couples the redox reaction to proton translocation (for every two electrons transferred, four hydrogen ions are translocated across the cytoplasmic membrane), and thus conserves the redox energy in a proton gradient. This is NADH-quinone oxidoreductase subunit N from Brevibacillus brevis (strain 47 / JCM 6285 / NBRC 100599).